Reading from the N-terminus, the 310-residue chain is Methionyl-tRNA formyltransferase (310 aa).

(6S)-5,6,7,8-tetrahydrofolate is bound at residue Ser109–Pro112.

Belongs to the Fmt family.

It catalyses the reaction L-methionyl-tRNA(fMet) + (6R)-10-formyltetrahydrofolate = N-formyl-L-methionyl-tRNA(fMet) + (6S)-5,6,7,8-tetrahydrofolate + H(+). Its function is as follows. Attaches a formyl group to the free amino group of methionyl-tRNA(fMet). The formyl group appears to play a dual role in the initiator identity of N-formylmethionyl-tRNA by promoting its recognition by IF2 and preventing the misappropriation of this tRNA by the elongation apparatus. This Chloroflexus aurantiacus (strain ATCC 29366 / DSM 635 / J-10-fl) protein is Methionyl-tRNA formyltransferase.